Consider the following 1328-residue polypeptide: Peroxidasin homolog pxn-2 (1328 aa).

The N-terminal stretch at 1–16 is a signal peptide; sequence MLLEFLLLIGISLSTA. Residues 17–45 form the LRRNT domain; sequence CPSECRCAGLDVHCEGKNLTAIPGHIPIA. The N-linked (GlcNAc...) asparagine glycan is linked to N34. LRR repeat units lie at residues 42 to 66, 67 to 90, 92 to 114, 116 to 137, 138 to 161, and 164 to 191; these read IPIATTNLYFSNNLLNSLSKSNFQA, LPNLQYLDLSNNSIRDIEETLLDS, PGLKYLDLSWNKIRYVPKLSTAP, ALVSLNLVHNEISRLDNDLVSH, SPYMQTFLIQRNRIQSLPHDFFNS, and VPTLKTVKMAGNPWSCDCRMVNVKQFAD. N-linked (GlcNAc...) asparagine glycosylation is present at N77. Residue N220 is glycosylated (N-linked (GlcNAc...) asparagine). Positions 305 to 332 are disordered; that stretch reads KKMQASSSTEPPITTTTMEPMTTSTMDS. Low complexity predominate over residues 310–332; the sequence is SSSTEPPITTTTMEPMTTSTMDS. 2 consecutive Ig-like C2-type domains span residues 346-438 and 445-532; these read PEID…FSVS and PVII…ANLL. A disulfide bridge connects residues C373 and C422. 2 N-linked (GlcNAc...) asparagine glycosylation sites follow: N403 and N455. The cysteines at positions 466 and 516 are disulfide-linked. An N-linked (GlcNAc...) asparagine glycan is attached at N630. A disulfide bond links C660 and C676. D754 serves as a coordination point for heme b. The active-site Proton acceptor is H755. Residue D756 coordinates Ca(2+). 2 disulfides stabilise this stretch: C775–C785 and C779–C807. N-linked (GlcNAc...) asparagine glycosylation is present at N776. Ca(2+) contacts are provided by T839, Y841, D843, and S845. N894 carries N-linked (GlcNAc...) asparagine glycosylation. Residues E913 and H1008 each coordinate heme b. The stretch at 1085–1109 is one LRR 7 repeat; the sequence is ALDLAALNIQRGRDHGLPSWTEYRK. 2 cysteine pairs are disulfide-bonded: C1111/C1168 and C1209/C1236. N-linked (GlcNAc...) asparagine glycosylation is found at N1112 and N1128. One copy of the LRR 8 repeat lies at 1204-1225; the sequence is LSKIICTNGDDIDRIQRDIFVY. N1228 is a glycosylation site (N-linked (GlcNAc...) asparagine). The segment at 1266 to 1297 is disordered; it reads IGGDEKAKRRKRRHHHSKKSCHDKGKRRKSGD. Over residues 1273–1295 the composition is skewed to basic residues; sequence KRRKRRHHHSKKSCHDKGKRRKS. An N-linked (GlcNAc...) asparagine glycan is attached at N1300.

The protein belongs to the peroxidase family. XPO subfamily. It depends on Ca(2+) as a cofactor. Heme b serves as cofactor. Expressed in vulval muscles and in some neurons including PVQ. Expressed in the hypodermis and in coelomocytes.

Its subcellular location is the secreted. The protein localises to the extracellular space. The protein resides in the extracellular matrix. It is found in the basement membrane. The enzyme catalyses L-lysyl-[collagen] + L-methionyl-[collagen] + H2O2 = [collagen]-L-lysyl-N-S-L-methionyl-[collagen] + 2 H2O + H(+). The catalysed reaction is bromide + H2O2 = hypobromite + H2O. It carries out the reaction L-lysyl-[collagen] + L-methionyl-[collagen] + hypobromite = [collagen]-L-lysyl-N-S-L-methionyl-[collagen] + bromide + H2O + H(+). It catalyses the reaction L-tyrosyl-[protein] + bromide + H2O2 + H(+) = 3-bromo-L-tyrosyl-[protein] + 2 H2O. The enzyme catalyses hypobromite + L-tyrosyl-[protein] + H(+) = 3-bromo-L-tyrosyl-[protein] + H2O. Catalyzes the two-electron oxidation of bromide by hydrogen peroxide and generates hypobromite as a reactive intermediate which mediates the formation of sulfilimine cross-links between methionine and hydroxylysine residues within an uncross-linked collagen IV/COL4A1 NC1 hexamer. Required for embryonic morphogenesis playing a role in epidermal elongation at the twofold stage of embryonic development. Required post-embryonically for basement membrane integrity and muscle-epidermal attachments, and specifically in the function of basement membrane components such as the type IV collagens. May have a role in inhibiting axon regeneration. May functionally antagonize the peroxidasin pxn-1. This Caenorhabditis elegans protein is Peroxidasin homolog pxn-2.